The chain runs to 440 residues: Chromosome partition protein MukF (440 aa).

The interval 208 to 236 is leucine-zipper; the sequence is LSETSGTLRELQDTLEAAGDKLQANLLRI.

This sequence belongs to the MukF family. As to quaternary structure, interacts, and probably forms a ternary complex, with MukE and MukB via its C-terminal region. The complex formation is stimulated by calcium or magnesium. It is required for an interaction between MukE and MukB.

The protein resides in the cytoplasm. The protein localises to the nucleoid. Involved in chromosome condensation, segregation and cell cycle progression. May participate in facilitating chromosome segregation by condensation DNA from both sides of a centrally located replisome during cell division. Not required for mini-F plasmid partitioning. Probably acts via its interaction with MukB and MukE. Overexpression results in anucleate cells. It has a calcium binding activity. The chain is Chromosome partition protein MukF from Salmonella agona (strain SL483).